The primary structure comprises 364 residues: NAC transcription factor 56 (364 aa).

The tract at residues 1 to 23 (MESTDSSGGPPPPQPNLPPGFRF) is disordered. A compositionally biased stretch (pro residues) spans 9–18 (GPPPPQPNLP). An NAC domain is found at 17–178 (LPPGFRFHPT…DWVLCRIYKK (162 aa)). A DNA-binding region spans residues 116–184 (VGVKKALVFY…IYKKNNASRH (69 aa)).

Stamen specific, in anthers from stage 8. Expressed in the outer integument, but seems not expressed in the embryo at the torpedo stage.

It localises to the nucleus. Functionally, transcription factor of the NAC family. Together with NAC018/NARS2, regulates embryogenesis by regulating the development and degeneration of ovule integuments, a process required for intertissue communication between the embryo and the maternal integument. This chain is NAC transcription factor 56, found in Arabidopsis thaliana (Mouse-ear cress).